Here is a 71-residue protein sequence, read N- to C-terminus: Large ribosomal subunit protein bL31 (71 aa).

Residues C16, C18, C37, and C40 each contribute to the Zn(2+) site.

This sequence belongs to the bacterial ribosomal protein bL31 family. Type A subfamily. As to quaternary structure, part of the 50S ribosomal subunit. It depends on Zn(2+) as a cofactor.

In terms of biological role, binds the 23S rRNA. This is Large ribosomal subunit protein bL31 from Pseudomonas putida (strain W619).